The chain runs to 403 residues: 3-oxoacyl-[acyl-carrier-protein] synthase 2 (403 aa).

Residues 1–403 form the Ketosynthase family 3 (KS3) domain; it reads VITGMGALSP…GGHNAVLVFK (403 aa). Active-site for beta-ketoacyl synthase activity residues include cysteine 158, histidine 297, and histidine 334.

The protein belongs to the thiolase-like superfamily. Beta-ketoacyl-ACP synthases family.

It carries out the reaction a fatty acyl-[ACP] + malonyl-[ACP] + H(+) = a 3-oxoacyl-[ACP] + holo-[ACP] + CO2. The enzyme catalyses (9Z)-hexadecenoyl-[ACP] + malonyl-[ACP] + H(+) = 3-oxo-(11Z)-octadecenoyl-[ACP] + holo-[ACP] + CO2. It participates in lipid metabolism; fatty acid biosynthesis. Its function is as follows. Involved in the type II fatty acid elongation cycle. Catalyzes the elongation of a wide range of acyl-ACP by the addition of two carbons from malonyl-ACP to an acyl acceptor. Can efficiently catalyze the conversion of palmitoleoyl-ACP (cis-hexadec-9-enoyl-ACP) to cis-vaccenoyl-ACP (cis-octadec-11-enoyl-ACP), an essential step in the thermal regulation of fatty acid composition. This chain is 3-oxoacyl-[acyl-carrier-protein] synthase 2 (fabF), found in Staphylococcus aureus.